The following is a 39-amino-acid chain: Photosystem II reaction center protein L (39 aa).

A helical transmembrane segment spans residues 18–38; the sequence is SLYLGLLFVFVTGVLMSSYFF.

This sequence belongs to the PsbL family. In terms of assembly, PSII is composed of 1 copy each of membrane proteins PsbA, PsbB, PsbC, PsbD, PsbE, PsbF, PsbH, PsbI, PsbJ, PsbK, PsbL, PsbM, PsbT, PsbX, PsbY, PsbZ, Psb30/Ycf12, peripheral proteins PsbO, CyanoQ (PsbQ), PsbU, PsbV and a large number of cofactors. It forms dimeric complexes.

Its subcellular location is the cellular thylakoid membrane. Functionally, one of the components of the core complex of photosystem II (PSII). PSII is a light-driven water:plastoquinone oxidoreductase that uses light energy to abstract electrons from H(2)O, generating O(2) and a proton gradient subsequently used for ATP formation. It consists of a core antenna complex that captures photons, and an electron transfer chain that converts photonic excitation into a charge separation. This subunit is found at the monomer-monomer interface and is required for correct PSII assembly and/or dimerization. The polypeptide is Photosystem II reaction center protein L (Synechococcus sp. (strain CC9605)).